A 345-amino-acid polypeptide reads, in one-letter code: Probable dual-specificity RNA methyltransferase RlmN (345 aa).

Glu-98 serves as the catalytic Proton acceptor. The Radical SAM core domain maps to 104 to 332 (TYKRLTVCVS…VSIRYSRGLE (229 aa)). A disulfide bridge connects residues Cys-111 and Cys-337. [4Fe-4S] cluster-binding residues include Cys-118, Cys-122, and Cys-125. Residues 165 to 166 (GE), Ser-195, 218 to 220 (SLH), and Asn-294 each bind S-adenosyl-L-methionine. Cys-337 acts as the S-methylcysteine intermediate in catalysis.

The protein belongs to the radical SAM superfamily. RlmN family. It depends on [4Fe-4S] cluster as a cofactor.

Its subcellular location is the cytoplasm. It catalyses the reaction adenosine(2503) in 23S rRNA + 2 reduced [2Fe-2S]-[ferredoxin] + 2 S-adenosyl-L-methionine = 2-methyladenosine(2503) in 23S rRNA + 5'-deoxyadenosine + L-methionine + 2 oxidized [2Fe-2S]-[ferredoxin] + S-adenosyl-L-homocysteine. The enzyme catalyses adenosine(37) in tRNA + 2 reduced [2Fe-2S]-[ferredoxin] + 2 S-adenosyl-L-methionine = 2-methyladenosine(37) in tRNA + 5'-deoxyadenosine + L-methionine + 2 oxidized [2Fe-2S]-[ferredoxin] + S-adenosyl-L-homocysteine. Specifically methylates position 2 of adenine 2503 in 23S rRNA and position 2 of adenine 37 in tRNAs. This Trichodesmium erythraeum (strain IMS101) protein is Probable dual-specificity RNA methyltransferase RlmN.